The chain runs to 525 residues: MSNENEKSIVEYFYIGERVKGDDGSVGTIRYQGKVDGFEGNWYGIEWDDPKRGKHQGTVKGKQYFKCINKGSGSFMKYEKLIKGETFMKSISDKFHQKIDNYDDLYVDSTKEDIKIQIQMIGMNQTRENQKKFIAQTLLSASYLPISEIDESPLIYNNFKNLIELNLSNCLLNSWTQIVKLLKQLPNLNRLHLCNNRLSFNIDEFKKEVNSNNEYGNSIDDCNVKDLILVNSNLSNWSIVSSICKYLFKNIESICLSSNSIENINLFKSILNNDNENENENENEIVEQQQQQQPQYLFPTLKSLDLANNNIKSFNDILSSLGNLPQLTELNLNNNQITDIEFNGDVDDGNKSNNGKTNQFKNLKRIYLSNNKINDWKYLDKLDELQSLDELSFRNNPIVDSLLISNSNNSNTNENEIENDIENNNNNIKKDNNNNNKNNKNNKNNKTIFLNRLNIIPRLSNLKKLNLSDITLLERKDAELYFLYENYNSIDKFKNNKKLNYLISIHGEPVYTKMSLQLEKEENGK.

One can recognise a CAP-Gly domain in the interval 33–77; it reads GKVDGFEGNWYGIEWDDPKRGKHQGTVKGKQYFKCINKGSGSFMK. LRR repeat units lie at residues 300–321, 326–347, and 362–383; these read TLKS…LSSL, QLTE…GDVD, and NLKR…DKLD. The interval 414 to 444 is disordered; the sequence is ENEIENDIENNNNNIKKDNNNNNKNNKNNKN. Positions 422 to 444 are enriched in low complexity; it reads ENNNNNIKKDNNNNNKNNKNNKN. Residues 441–481 enclose the LRRCT domain; the sequence is NNKNNKTIFLNRLNIIPRLSNLKKLNLSDITLLERKDAELY.

It belongs to the TBCE family. Supercomplex made of cofactors A to E. Cofactors A and D function by capturing and stabilizing tubulin in a quasi-native conformation. Cofactor E binds to the cofactor D-tubulin complex; interaction with cofactor C then causes the release of tubulin polypeptides that are committed to the native state.

The protein resides in the cytoplasm. Its subcellular location is the cytoskeleton. Its function is as follows. Tubulin-folding protein; involved in the second step of the tubulin folding pathway. The chain is Tubulin-specific chaperone E (tbce) from Dictyostelium discoideum (Social amoeba).